A 384-amino-acid polypeptide reads, in one-letter code: Alanine racemase (384 aa).

The active-site Proton acceptor; specific for D-alanine is the K39. An N6-(pyridoxal phosphate)lysine modification is found at K39. R138 is a substrate binding site. Y265 functions as the Proton acceptor; specific for L-alanine in the catalytic mechanism. A substrate-binding site is contributed by M312.

This sequence belongs to the alanine racemase family. The cofactor is pyridoxal 5'-phosphate.

The enzyme catalyses L-alanine = D-alanine. Its pathway is amino-acid biosynthesis; D-alanine biosynthesis; D-alanine from L-alanine: step 1/1. Its function is as follows. Catalyzes the interconversion of L-alanine and D-alanine. May also act on other amino acids. The protein is Alanine racemase (alr) of Staphylococcus carnosus (strain TM300).